The sequence spans 386 residues: Cell division protein FtsZ (386 aa).

GTP-binding positions include 21-25 (GGGGN), 108-110 (GTG), glutamate 139, arginine 143, and asparagine 187.

It belongs to the FtsZ family. Homodimer. Polymerizes to form a dynamic ring structure in a strictly GTP-dependent manner. Interacts directly with several other division proteins.

It is found in the cytoplasm. Functionally, essential cell division protein that forms a contractile ring structure (Z ring) at the future cell division site. The regulation of the ring assembly controls the timing and the location of cell division. One of the functions of the FtsZ ring is to recruit other cell division proteins to the septum to produce a new cell wall between the dividing cells. Binds GTP and shows GTPase activity. The chain is Cell division protein FtsZ from Coxiella burnetii (strain RSA 493 / Nine Mile phase I).